We begin with the raw amino-acid sequence, 878 residues long: Leucine--tRNA ligase (878 aa).

Positions 56-66 (PYPSGKLHMGH) match the 'HIGH' region motif. Residues 630–634 (KMSKS) carry the 'KMSKS' region motif. Lysine 633 lines the ATP pocket.

This sequence belongs to the class-I aminoacyl-tRNA synthetase family.

It localises to the cytoplasm. The catalysed reaction is tRNA(Leu) + L-leucine + ATP = L-leucyl-tRNA(Leu) + AMP + diphosphate. This chain is Leucine--tRNA ligase, found in Prochlorococcus marinus (strain MIT 9313).